The primary structure comprises 374 residues: Ribosomal RNA large subunit methyltransferase G (374 aa).

It belongs to the methyltransferase superfamily. RlmG family.

It is found in the cytoplasm. It carries out the reaction guanosine(1835) in 23S rRNA + S-adenosyl-L-methionine = N(2)-methylguanosine(1835) in 23S rRNA + S-adenosyl-L-homocysteine + H(+). Its function is as follows. Specifically methylates the guanine in position 1835 (m2G1835) of 23S rRNA. In Pseudomonas fluorescens (strain ATCC BAA-477 / NRRL B-23932 / Pf-5), this protein is Ribosomal RNA large subunit methyltransferase G.